A 181-amino-acid chain; its full sequence is Probable RNA 2'-phosphotransferase (181 aa).

The protein belongs to the KptA/TPT1 family.

In terms of biological role, removes the 2'-phosphate from RNA via an intermediate in which the phosphate is ADP-ribosylated by NAD followed by a presumed transesterification to release the RNA and generate ADP-ribose 1''-2''-cyclic phosphate (APPR&gt;P). May function as an ADP-ribosylase. The chain is Probable RNA 2'-phosphotransferase from Acaryochloris marina (strain MBIC 11017).